The following is a 663-amino-acid chain: Bicarbonate transport ATP-binding protein CmpC (663 aa).

Residues 5-239 (VAVENIEKSF…RPRKRMDVVH (235 aa)) enclose the ABC transporter domain. 42–49 (GHSGCGKS) contributes to the ATP binding site. The tract at residues 281-663 (LEIGYVPLMA…LDQPRPIAAA (383 aa)) is cmpA-like.

This sequence belongs to the ABC transporter superfamily. Nitrate/nitrite/cyanate uptake transporter (NitT) (TC 3.A.1.16) family. The complex is composed of two ATP-binding proteins (CmpC and CmpD), a transmembrane protein (CmpB) and a solute-binding protein (CmpA).

The protein resides in the cell inner membrane. Its function is as follows. Part of the ABC transporter complex CmpABCD involved in bicarbonate transport. Responsible for energy coupling to the transport system. This is Bicarbonate transport ATP-binding protein CmpC (cmpC) from Synechococcus elongatus (strain ATCC 33912 / PCC 7942 / FACHB-805) (Anacystis nidulans R2).